We begin with the raw amino-acid sequence, 368 residues long: NAD(P)H-quinone oxidoreductase subunit 1, chloroplastic (368 aa).

9 helical membrane passes run 11-31 (RVINLSFVLGFIKEIFGLIWI), 33-53 (IYILIPILGVLIGLLVIVWLE), 98-118 (WLFSIGPAIVVIPILSSYLVI), 131-151 (IGVFFRIAVSSIAPLGLLMAG), 177-197 (LALCVLSISLLSNSLGTVDIV), 205-225 (FWGWNLWRQPIGFIAFFISSL), 255-275 (FGLFYVASYLNLLASSLFVTI), 305-325 (VLGITMGILITLAKAYLFLFI), and 348-368 (FLLPIALGNLLLTASFQLLLL).

It belongs to the complex I subunit 1 family. In terms of assembly, NDH is composed of at least 16 different subunits, 5 of which are encoded in the nucleus.

It is found in the plastid. It localises to the chloroplast thylakoid membrane. It catalyses the reaction a plastoquinone + NADH + (n+1) H(+)(in) = a plastoquinol + NAD(+) + n H(+)(out). The enzyme catalyses a plastoquinone + NADPH + (n+1) H(+)(in) = a plastoquinol + NADP(+) + n H(+)(out). In terms of biological role, NDH shuttles electrons from NAD(P)H:plastoquinone, via FMN and iron-sulfur (Fe-S) centers, to quinones in the photosynthetic chain and possibly in a chloroplast respiratory chain. The immediate electron acceptor for the enzyme in this species is believed to be plastoquinone. Couples the redox reaction to proton translocation, and thus conserves the redox energy in a proton gradient. The protein is NAD(P)H-quinone oxidoreductase subunit 1, chloroplastic of Cycas taitungensis (Prince sago).